We begin with the raw amino-acid sequence, 430 residues long: Aspartate aminotransferase, mitochondrial (430 aa).

Residues 1 to 28 (MALAMMIRNAASKRGMTPISGHFGGLRS) constitute a mitochondrion transit peptide. Gly65, Trp160, and Asn213 together coordinate L-aspartate. The residue at position 277 (Lys277) is an N6-(pyridoxal phosphate)lysine. Arg405 is an L-aspartate binding site.

It belongs to the class-I pyridoxal-phosphate-dependent aminotransferase family. Homodimer. The cofactor is pyridoxal 5'-phosphate.

The protein localises to the mitochondrion matrix. It carries out the reaction L-aspartate + 2-oxoglutarate = oxaloacetate + L-glutamate. Amino acid aminotransferase important for the metabolism of amino acids and Krebs-cycle related organic acids. No activity with D-Asp or D-Ala as amino donors. In plants, it is involved in nitrogen metabolism and in aspects of carbon and energy metabolism. This chain is Aspartate aminotransferase, mitochondrial (ASP1), found in Arabidopsis thaliana (Mouse-ear cress).